Reading from the N-terminus, the 216-residue chain is tRNA (guanine-N(7)-)-methyltransferase (216 aa).

Positions 44, 69, 97, and 119 each coordinate S-adenosyl-L-methionine. Residue Asp-119 is part of the active site. Residues Lys-123, Asp-155, and 192 to 195 (TEYE) each bind substrate.

It belongs to the class I-like SAM-binding methyltransferase superfamily. TrmB family.

It carries out the reaction guanosine(46) in tRNA + S-adenosyl-L-methionine = N(7)-methylguanosine(46) in tRNA + S-adenosyl-L-homocysteine. The protein operates within tRNA modification; N(7)-methylguanine-tRNA biosynthesis. Catalyzes the formation of N(7)-methylguanine at position 46 (m7G46) in tRNA. This chain is tRNA (guanine-N(7)-)-methyltransferase, found in Lysinibacillus sphaericus (strain C3-41).